The chain runs to 335 residues: Solute-binding protein Veis_3954 (335 aa).

A signal peptide spans 1–34 (MPSTRPLPRPSSRSLRRLALGLGLAFGLGATAAA). Residues Gln50, Glu82, 155-158 (NGFR), Arg179, and Asn219 contribute to the (R)-pantoate site.

The protein belongs to the bacterial solute-binding protein 7 family. In terms of assembly, the complex is comprised of an extracytoplasmic solute-binding protein and a heteromeric permease formed by two transmembrane proteins.

The protein localises to the periplasm. In terms of biological role, solute-binding protein that binds (R)-pantoate and D-erythronate (in vitro). Probably part of a tripartite ATP-independent periplasmic (TRAP) transport system that mediates solute transport into the cytoplasm. The sequence is that of Solute-binding protein Veis_3954 from Verminephrobacter eiseniae (strain EF01-2).